Consider the following 317-residue polypeptide: D-aminoacyl-tRNA deacylase (317 aa).

Belongs to the DtdA deacylase family. Zn(2+) is required as a cofactor. As to expression, ubiquitous.

Its subcellular location is the nucleus. It is found in the cytoplasm. It carries out the reaction a D-aminoacyl-tRNA + H2O = a tRNA + a D-alpha-amino acid + H(+). The enzyme catalyses glycyl-tRNA(Ala) + H2O = tRNA(Ala) + glycine + H(+). Functionally, hydrolyzes D-aminoacyl-tRNA into D-amino acid and free tRNA. Broad specificity toward the amino acid, but strict specificity toward the D-isomer. Seems to be required for ethanol tolerance. In Arabidopsis thaliana (Mouse-ear cress), this protein is D-aminoacyl-tRNA deacylase (GEK1).